A 147-amino-acid polypeptide reads, in one-letter code: Large ribosomal subunit protein uL15 (147 aa).

A disordered region spans residues M1–L57. Positions K10–A20 are enriched in basic residues.

This sequence belongs to the universal ribosomal protein uL15 family. In terms of assembly, part of the 50S ribosomal subunit.

In terms of biological role, binds to the 23S rRNA. The protein is Large ribosomal subunit protein uL15 of Nostoc punctiforme (strain ATCC 29133 / PCC 73102).